Reading from the N-terminus, the 572-residue chain is Sulfite reductase [NADPH] hemoprotein beta-component (572 aa).

The [4Fe-4S] cluster site is built by cysteine 436, cysteine 442, cysteine 481, and cysteine 485. Cysteine 485 is a binding site for siroheme.

It belongs to the nitrite and sulfite reductase 4Fe-4S domain family. Alpha(8)-beta(8). The alpha component is a flavoprotein, the beta component is a hemoprotein. Siroheme serves as cofactor. It depends on [4Fe-4S] cluster as a cofactor.

It catalyses the reaction hydrogen sulfide + 3 NADP(+) + 3 H2O = sulfite + 3 NADPH + 4 H(+). The protein operates within sulfur metabolism; hydrogen sulfide biosynthesis; hydrogen sulfide from sulfite (NADPH route): step 1/1. In terms of biological role, component of the sulfite reductase complex that catalyzes the 6-electron reduction of sulfite to sulfide. This is one of several activities required for the biosynthesis of L-cysteine from sulfate. The polypeptide is Sulfite reductase [NADPH] hemoprotein beta-component (Bacillus pumilus (strain SAFR-032)).